The chain runs to 41 residues: Photosystem II reaction center protein L (41 aa).

A helical membrane pass occupies residues 20–40 (SLYWGLLLIFVLAVPFSNYFF).

It belongs to the PsbL family. As to quaternary structure, PSII is composed of 1 copy each of membrane proteins PsbA, PsbB, PsbC, PsbD, PsbE, PsbF, PsbH, PsbI, PsbJ, PsbK, PsbL, PsbM, PsbT, PsbX, PsbY, PsbZ, Psb30/Ycf12, at least 3 peripheral proteins of the oxygen-evolving complex and a large number of cofactors. It forms dimeric complexes.

It is found in the plastid. Its subcellular location is the chloroplast thylakoid membrane. In terms of biological role, one of the components of the core complex of photosystem II (PSII). PSII is a light-driven water:plastoquinone oxidoreductase that uses light energy to abstract electrons from H(2)O, generating O(2) and a proton gradient subsequently used for ATP formation. It consists of a core antenna complex that captures photons, and an electron transfer chain that converts photonic excitation into a charge separation. This subunit is found at the monomer-monomer interface and is required for correct PSII assembly and/or dimerization. This Pinus koraiensis (Korean pine) protein is Photosystem II reaction center protein L.